The chain runs to 410 residues: S-adenosylmethionine synthase (410 aa).

His-15 is a binding site for ATP. Asp-17 contributes to the Mg(2+) binding site. Position 43 (Glu-43) interacts with K(+). L-methionine contacts are provided by Glu-56 and Gln-100. Positions 100-110 (QSPDIAKGVDT) are flexible loop. Residues 171-173 (DGK), 248-249 (KF), Asp-257, 263-264 (RK), Ala-280, and Lys-284 contribute to the ATP site. Asp-257 is a binding site for L-methionine. Lys-288 provides a ligand contact to L-methionine.

It belongs to the AdoMet synthase family. As to quaternary structure, homotetramer; dimer of dimers. It depends on Mg(2+) as a cofactor. The cofactor is K(+).

It localises to the cytoplasm. It carries out the reaction L-methionine + ATP + H2O = S-adenosyl-L-methionine + phosphate + diphosphate. It participates in amino-acid biosynthesis; S-adenosyl-L-methionine biosynthesis; S-adenosyl-L-methionine from L-methionine: step 1/1. Its function is as follows. Catalyzes the formation of S-adenosylmethionine (AdoMet) from methionine and ATP. The overall synthetic reaction is composed of two sequential steps, AdoMet formation and the subsequent tripolyphosphate hydrolysis which occurs prior to release of AdoMet from the enzyme. This chain is S-adenosylmethionine synthase, found in Prochlorococcus marinus (strain MIT 9211).